The sequence spans 373 residues: Anhydro-N-acetylmuramic acid kinase (373 aa).

Position 12 to 19 (12 to 19 (GTSLDGVD)) interacts with ATP.

It belongs to the anhydro-N-acetylmuramic acid kinase family.

It catalyses the reaction 1,6-anhydro-N-acetyl-beta-muramate + ATP + H2O = N-acetyl-D-muramate 6-phosphate + ADP + H(+). The protein operates within amino-sugar metabolism; 1,6-anhydro-N-acetylmuramate degradation. It participates in cell wall biogenesis; peptidoglycan recycling. Catalyzes the specific phosphorylation of 1,6-anhydro-N-acetylmuramic acid (anhMurNAc) with the simultaneous cleavage of the 1,6-anhydro ring, generating MurNAc-6-P. Is required for the utilization of anhMurNAc either imported from the medium or derived from its own cell wall murein, and thus plays a role in cell wall recycling. This is Anhydro-N-acetylmuramic acid kinase from Salmonella paratyphi A (strain ATCC 9150 / SARB42).